A 229-amino-acid polypeptide reads, in one-letter code: Ribonuclease 3 (229 aa).

The 123-residue stretch at 5-127 folds into the RNase III domain; sequence LDRLERKLGY…LIGAIYLDTG (123 aa). Residue glutamate 40 coordinates Mg(2+). Residue aspartate 44 is part of the active site. Mg(2+)-binding residues include aspartate 113 and glutamate 116. Glutamate 116 is an active-site residue. Positions 154–224 constitute a DRBM domain; sequence DPKTRLQEFL…AAAALVALGV (71 aa).

It belongs to the ribonuclease III family. In terms of assembly, homodimer. It depends on Mg(2+) as a cofactor.

It localises to the cytoplasm. It carries out the reaction Endonucleolytic cleavage to 5'-phosphomonoester.. Digests double-stranded RNA. Involved in the processing of primary rRNA transcript to yield the immediate precursors to the large and small rRNAs (23S and 16S). Processes some mRNAs, and tRNAs when they are encoded in the rRNA operon. Processes pre-crRNA and tracrRNA of type II CRISPR loci if present in the organism. In Pseudomonas aeruginosa (strain LESB58), this protein is Ribonuclease 3.